The following is a 120-amino-acid chain: Protein RALF-like 1 (120 aa).

The signal sequence occupies residues 1–26 (MDKSFTLFLTLTILVVFIISSPPVQA). Positions 27–71 (GFANDLGGVAWATTGDNGSGCHGSIAECIGAEEEEMDSEINRRIL) are cleaved as a propeptide — removed in mature form. N-linked (GlcNAc...) asparagine glycosylation is present at Asn43. 2 disulfides stabilise this stretch: Cys89-Cys99 and Cys112-Cys118.

The protein belongs to the plant rapid alkalinization factor (RALF) family. As to quaternary structure, interacts with FER and promotes its phosphorylation and subsequent activation. Post-translationally, proteolytically cleaved, probably by S1P, a subtilisin-like serine protease (subtilase). Expressed in roots and stems.

Its subcellular location is the secreted. Its function is as follows. Cell signaling peptide that may regulate plant stress, growth, and development. Mediates a rapid alkalinization of extracellular space by mediating a transient increase in the cytoplasmic Ca(2+) concentration leading to a calcium-dependent signaling events through a cell surface receptor and a concomitant activation of some intracellular mitogen-activated protein kinases. Mostly active in roots. Prevents plant growth (e.g. root and leaf length). Suppresses cell elongation of the primary root by activating the cell surface receptor FER and triggering phosphorylation of AHA2 and subsequent extracellular alkalinization. This chain is Protein RALF-like 1 (RALF1), found in Arabidopsis thaliana (Mouse-ear cress).